The chain runs to 451 residues: MTRKFFGTDGIRGQANSFPMTPEIAMKVGMAVGYIFRRKGQASRVVIGKDTRRSGYMLENALVAGFTAAGMDVFLLGPIPTPAVAMLCRSLRADIGVMISASHNPFYDNGIKLFGPDGFKLSDQIELQIEAMIEGDMTPFLASHGDVGRAKRVDGDIYRYIEFAKRTLPRNISLNGLRVVVDCANGAGYKVAPAALWELGAEVITINNEPNGININEDCGSTHPIGLMKKVHEVRADVGIALDGDADRVLLVDENGTVIDGDQLMAVIAESWAASNRLEGGGIVATVMSNLGLERFLADRNLTLARTKVGDRYVVEHMREHGFNVGGEQSGHIVLSDFATTGDGLISALQILAVAQEQNKPISDVCRKFQPVPQLLKNVRTTGGKPLENKRVKSAIDEAKERLGGQGRLVIRPSGTEPLIRVMAEGDDRGLVEKVVNDIIDVISSESSAAA.

The Phosphoserine intermediate role is filled by serine 102. Mg(2+) contacts are provided by serine 102, aspartate 243, aspartate 245, and aspartate 247. At serine 102 the chain carries Phosphoserine.

This sequence belongs to the phosphohexose mutase family. Requires Mg(2+) as cofactor. In terms of processing, activated by phosphorylation.

The enzyme catalyses alpha-D-glucosamine 1-phosphate = D-glucosamine 6-phosphate. Its function is as follows. Catalyzes the conversion of glucosamine-6-phosphate to glucosamine-1-phosphate. The protein is Phosphoglucosamine mutase of Brucella canis (strain ATCC 23365 / NCTC 10854 / RM-666).